The sequence spans 669 residues: DNA mismatch repair protein MutL (669 aa).

The disordered stretch occupies residues 356–377 (FEQRQNTENNQEKTFSSEESNS). A compositionally biased stretch (polar residues) spans 361-377 (NTENNQEKTFSSEESNS).

This sequence belongs to the DNA mismatch repair MutL/HexB family.

Functionally, this protein is involved in the repair of mismatches in DNA. It is required for dam-dependent methyl-directed DNA mismatch repair. May act as a 'molecular matchmaker', a protein that promotes the formation of a stable complex between two or more DNA-binding proteins in an ATP-dependent manner without itself being part of a final effector complex. The polypeptide is DNA mismatch repair protein MutL (Staphylococcus aureus (strain MSSA476)).